We begin with the raw amino-acid sequence, 333 residues long: NADH-quinone oxidoreductase subunit H (333 aa).

Helical transmembrane passes span 17–37 (IFFA…TYGI), 88–108 (FILA…ALPF), 117–137 (IGVG…GVVT), 159–179 (ISYE…SGSL), 191–211 (VWFI…AVAE), 241–261 (FFML…TVLF), 273–293 (FIPG…LFIW), and 313–333 (VLLP…QLFF).

Belongs to the complex I subunit 1 family. NDH-1 is composed of 14 different subunits. Subunits NuoA, H, J, K, L, M, N constitute the membrane sector of the complex.

It is found in the cell membrane. The enzyme catalyses a quinone + NADH + 5 H(+)(in) = a quinol + NAD(+) + 4 H(+)(out). Its function is as follows. NDH-1 shuttles electrons from NADH, via FMN and iron-sulfur (Fe-S) centers, to quinones in the respiratory chain. The immediate electron acceptor for the enzyme in this species is believed to be ubiquinone. Couples the redox reaction to proton translocation (for every two electrons transferred, four hydrogen ions are translocated across the cytoplasmic membrane), and thus conserves the redox energy in a proton gradient. This subunit may bind ubiquinone. This Anoxybacillus flavithermus (strain DSM 21510 / WK1) protein is NADH-quinone oxidoreductase subunit H.